The following is a 518-amino-acid chain: Sensor protein kinase HptS (518 aa).

A run of 2 helical transmembrane segments spans residues 20–40 (IFPVFLVIIIGLVSFYAIYIW) and 222–242 (GITLLIVMAVVLVLLVIFGFI). Positions 297–513 (EQLIHSIEHT…LICYKIPLSR (217 aa)) constitute a Histidine kinase domain. His-325 carries the post-translational modification Phosphohistidine; by autocatalysis.

In terms of processing, autophosphorylated.

The protein localises to the cell membrane. It catalyses the reaction ATP + protein L-histidine = ADP + protein N-phospho-L-histidine.. Functionally, member of the two-component regulatory system HptS/HptR that regulates genes involved in hexose phosphate transport system in response to changes in extracellular phosphate sources. May act as a sensor protein kinase which is autophosphorylated at a histidine residue and transfers its phosphate group to the conserved aspartic acid residue in the regulatory domain of HptS. In turn, HptS antagonizes CcpA-dependent transcription of a subset of CcpA-regulated genes involved in antibiotic susceptibility. In Staphylococcus aureus (strain Mu50 / ATCC 700699), this protein is Sensor protein kinase HptS (hptS).